Consider the following 207-residue polypeptide: Guanylate kinase (207 aa).

In terms of domain architecture, Guanylate kinase-like spans 4-184 (GTLYIVSAPS…ALTDLKTIIR (181 aa)). 11–18 (APSGAGKS) is an ATP binding site.

This sequence belongs to the guanylate kinase family.

Its subcellular location is the cytoplasm. It carries out the reaction GMP + ATP = GDP + ADP. Functionally, essential for recycling GMP and indirectly, cGMP. This Escherichia coli O157:H7 protein is Guanylate kinase.